The chain runs to 159 residues: 2-C-methyl-D-erythritol 2,4-cyclodiphosphate synthase (159 aa).

A divalent metal cation-binding residues include Asp10 and His12. Residues 10 to 12 (DVH) and 36 to 37 (HS) contribute to the 4-CDP-2-C-methyl-D-erythritol 2-phosphate site. His44 is an a divalent metal cation binding site. Residues 58-60 (DIG), 63-67 (FPDTD), 102-108 (AQAPKMA), 134-137 (TTTE), Phe141, and Arg144 contribute to the 4-CDP-2-C-methyl-D-erythritol 2-phosphate site.

This sequence belongs to the IspF family. Homotrimer. It depends on a divalent metal cation as a cofactor.

It catalyses the reaction 4-CDP-2-C-methyl-D-erythritol 2-phosphate = 2-C-methyl-D-erythritol 2,4-cyclic diphosphate + CMP. It participates in isoprenoid biosynthesis; isopentenyl diphosphate biosynthesis via DXP pathway; isopentenyl diphosphate from 1-deoxy-D-xylulose 5-phosphate: step 4/6. Its function is as follows. Involved in the biosynthesis of isopentenyl diphosphate (IPP) and dimethylallyl diphosphate (DMAPP), two major building blocks of isoprenoid compounds. Catalyzes the conversion of 4-diphosphocytidyl-2-C-methyl-D-erythritol 2-phosphate (CDP-ME2P) to 2-C-methyl-D-erythritol 2,4-cyclodiphosphate (ME-CPP) with a corresponding release of cytidine 5-monophosphate (CMP). In Shewanella piezotolerans (strain WP3 / JCM 13877), this protein is 2-C-methyl-D-erythritol 2,4-cyclodiphosphate synthase.